The primary structure comprises 344 residues: Ribosomal large subunit pseudouridine synthase D (344 aa).

A disordered region spans residues 1–29 (MMNRLINEQDGRNYSAKPDSSAAGSQENE). Positions 43–116 (LRLDQALAQL…IPLKILFEDD (74 aa)) constitute an S4 RNA-binding domain. Asp-164 is a catalytic residue.

The protein belongs to the pseudouridine synthase RluA family.

It localises to the cytoplasm. It carries out the reaction uridine(1911/1915/1917) in 23S rRNA = pseudouridine(1911/1915/1917) in 23S rRNA. Functionally, responsible for synthesis of pseudouridine from uracil at positions 1911, 1915 and 1917 in 23S ribosomal RNA. The protein is Ribosomal large subunit pseudouridine synthase D (rluD) of Nitrosomonas europaea (strain ATCC 19718 / CIP 103999 / KCTC 2705 / NBRC 14298).